Reading from the N-terminus, the 348-residue chain is S-adenosylmethionine-dependent nucleotide dehydratase RSAD2 (348 aa).

Positions 56-276 constitute a Radical SAM core domain; sequence SATPSSVNYH…LERHSSISCL (221 aa). [4Fe-4S] cluster contacts are provided by Cys70, Cys74, and Cys77.

The protein belongs to the radical SAM superfamily. RSAD2 family. [4Fe-4S] cluster serves as cofactor. In terms of tissue distribution, expressed at low levels in spleen and head kidney.

It localises to the endoplasmic reticulum membrane. Its function is as follows. Interferon-inducible iron-sulfur (4FE-4S) cluster-binding antiviral protein which plays a major role in the cell antiviral state induced by type I and type II interferon. This Oncorhynchus mykiss (Rainbow trout) protein is S-adenosylmethionine-dependent nucleotide dehydratase RSAD2.